The primary structure comprises 567 residues: Dihydroxy-acid dehydratase 1 (567 aa).

[2Fe-2S] cluster is bound at residue C57. A Mg(2+)-binding site is contributed by D89. C130 serves as a coordination point for [2Fe-2S] cluster. 2 residues coordinate Mg(2+): D131 and K132. Residue K132 is modified to N6-carboxylysine. C202 contributes to the [2Fe-2S] cluster binding site. E454 is a Mg(2+) binding site. The active-site Proton acceptor is the S480.

Belongs to the IlvD/Edd family. In terms of assembly, homodimer. [2Fe-2S] cluster is required as a cofactor. Mg(2+) serves as cofactor.

The catalysed reaction is (2R)-2,3-dihydroxy-3-methylbutanoate = 3-methyl-2-oxobutanoate + H2O. It catalyses the reaction (2R,3R)-2,3-dihydroxy-3-methylpentanoate = (S)-3-methyl-2-oxopentanoate + H2O. It functions in the pathway amino-acid biosynthesis; L-isoleucine biosynthesis; L-isoleucine from 2-oxobutanoate: step 3/4. It participates in amino-acid biosynthesis; L-valine biosynthesis; L-valine from pyruvate: step 3/4. In terms of biological role, functions in the biosynthesis of branched-chain amino acids. Catalyzes the dehydration of (2R,3R)-2,3-dihydroxy-3-methylpentanoate (2,3-dihydroxy-3-methylvalerate) into 2-oxo-3-methylpentanoate (2-oxo-3-methylvalerate) and of (2R)-2,3-dihydroxy-3-methylbutanoate (2,3-dihydroxyisovalerate) into 2-oxo-3-methylbutanoate (2-oxoisovalerate), the penultimate precursor to L-isoleucine and L-valine, respectively. This Aromatoleum aromaticum (strain DSM 19018 / LMG 30748 / EbN1) (Azoarcus sp. (strain EbN1)) protein is Dihydroxy-acid dehydratase 1.